Consider the following 177-residue polypeptide: Protein ParB (177 aa).

An N-terminal signal peptide occupies residues 1–26 (MKRRSYAMLRAAAALAVLVVASPAWA). Residues 27–157 (ELRGEVVRII…RGKRVGLWSD (131 aa)) form the TNase-like domain. Active-site residues include Arg53, Glu61, and Arg95.

Monomer. The cofactor is Ca(2+). Post-translationally, the N-terminus is blocked.

Its subcellular location is the secreted. With respect to regulation, endonuclease activity is inhibited by EDTA. Its function is as follows. Involved in plasmid partition. An endonuclease that acts on supercoiled dsDNA, converting it first to open circular DNA and then linearizing it. Preferentially cleaves regions in dsDNA that are capable of forming ssDNA, such as AT-rich regions and sequences that can form cruciforms. Has poor endonucleolytic activity on linear DNA, has 5'-3' exonuclease activity on dsDNA cleaving generating 3'-phosphonucleotides. The protein is Protein ParB of Escherichia coli.